The sequence spans 111 residues: uncharacterized protein (111 aa).

A helical transmembrane segment spans residues 48 to 70; it reads LFLVPFPASFTRWLTFLFHLVIY.

The protein resides in the membrane. This is an uncharacterized protein from Saccharomyces cerevisiae (strain ATCC 204508 / S288c) (Baker's yeast).